A 465-amino-acid chain; its full sequence is Mothers against decapentaplegic homolog 1 (465 aa).

In terms of domain architecture, MH1 spans 12 to 136 (PAVKRLLGWK…YKRVESPVLP (125 aa)). Zn(2+)-binding residues include C64, C109, C121, and H126. The disordered stretch occupies residues 161 to 240 (QNEPHMPHNA…EDQMTHDTSQ (80 aa)). The segment covering 179–210 (PNSHPFPHSPNSSYPNSPGSSSSTYPHSPASS) has biased composition (low complexity). Residues 271–465 (WCSIVYYELN…SPHNPISSVS (195 aa)) enclose the MH2 domain. Phosphoserine is present on residues S463 and S465.

It belongs to the dwarfin/SMAD family. As to quaternary structure, found in a complex with SMAD4 and YY1. Interacts with HGS, NANOG and ZCCHC12. Upon C-terminus phosphorylation: forms trimers with another SMAD1 and the co-SMAD SMAD4. Interacts with PEBP2-alpha subunit, CREB-binding protein (CBP), p300, SMURF1, SMURF2, USP15 and HOXC8. Associates with ZNF423 or ZNF521 in response to BMP2 leading to activate transcription of BMP target genes. Interacts with SKOR1. Interacts (via MH2 domain) with LEMD3. Binding to LEMD3 results in at least a partial reduction of receptor-mediated phosphorylation. Forms a ternary complex with PSMB4 and OAZ1 before PSMB4 is incorporated into the 20S proteasome. Found in a macromolecular complex with FAM83G. Interacts (via MH2 domain) with FAM83G (via MH2 domain); in a SMAD4-independent manner. Interacts with ZC3H3. Interacts with TMEM119. Interacts (via MH1 and MH2 domains) with ZNF8. Interacts with RANBP3L; the interaction increases when SMAD1 is not phosphorylated and mediates SMAD1 nuclear export. Interacts with EGR1; this interaction inhibits SMAD1 dephosphorylation. Interacts with SMAD6. Interacts with YAP1. Phosphorylation of the C-terminal SVS motif by BMP type 1 receptor kinase activates SMAD1 by promoting dissociation from the receptor and trimerization with SMAD4. Phosphorylation by ERK2 MAP kinase in response to EGF or HGF prevents SMAD1 nuclear accumulation and transcriptional activity in response to BMP. Dephosphorylation, probably by PPM1A, induces its export from the nucleus to the cytoplasm. Dephosphorylation is inhibited by association with EGR1. Phosphorylation by CDK8/9 creates binding sites for YAP1, and subsequent phosphorylation by GSK3 switches off YAP1 binding and adds binding sites for SMURF1. In terms of processing, ubiquitinated by SMAD-specific E3 ubiquitin ligase SMURF1, leading to its degradation. Monoubiquitinated, leading to prevent DNA-binding. Deubiquitination by USP15 alleviates inhibition and promotes activation of TGF-beta target genes. Dephosphorylation, probably by PPM1A, induces its export from the nucleus to the cytoplasm. Phospho-SMAD1 is ubiquitinated by CHIP leading to disruption of the SMAD1-SMAD4 complex.

The protein resides in the cytoplasm. It localises to the nucleus. Transcriptional modulator that plays a role in various cellular processes, including embryonic development, cell differentiation, and tissue homeostasis. Upon BMP ligand binding to their receptors at the cell surface, is phosphorylated by activated type I BMP receptors (BMPRIs) and associates with SMAD4 to form an heteromeric complex which translocates into the nucleus acting as transcription factor. In turn, the hetero-trimeric complex recognizes cis-regulatory elements containing Smad Binding Elements (SBEs) to modulate the outcome of the signaling network. SMAD1/OAZ1/PSMB4 complex mediates the degradation of the CREBBP/EP300 repressor SNIP1. This Coturnix japonica (Japanese quail) protein is Mothers against decapentaplegic homolog 1 (SMAD1).